The sequence spans 231 residues: Orotidine 5'-phosphate decarboxylase (231 aa).

Residues Asp12, Lys34, 61-70 (DMKLLDIDNT), Thr116, Arg177, Gln186, Gly206, and Arg207 each bind substrate. Lys63 serves as the catalytic Proton donor.

This sequence belongs to the OMP decarboxylase family. Type 1 subfamily. Homodimer.

The enzyme catalyses orotidine 5'-phosphate + H(+) = UMP + CO2. It participates in pyrimidine metabolism; UMP biosynthesis via de novo pathway; UMP from orotate: step 2/2. Catalyzes the decarboxylation of orotidine 5'-monophosphate (OMP) to uridine 5'-monophosphate (UMP). This Allorhizobium ampelinum (strain ATCC BAA-846 / DSM 112012 / S4) (Agrobacterium vitis (strain S4)) protein is Orotidine 5'-phosphate decarboxylase.